The chain runs to 1796 residues: Non-reducing polyketide synthase nscA (1796 aa).

The segment at 18–256 is N-terminal acylcarrier protein transacylase domain (SAT); it reads DDLKDLFRRL…PLPVYDGLCH (239 aa). A Ketosynthase family 3 (KS3) domain is found at 392–825; sequence SSKLAIVGMA…GGNTTLLLED (434 aa). Residues cysteine 565, histidine 700, and histidine 743 each act as for beta-ketoacyl synthase activity in the active site. A malonyl-CoA:ACP transacylase (MAT) domain region spans residues 931–1251; that stretch reads FTGQGAYYSG…SLVTLHLAGL (321 aa). The segment at 1317–1636 is product template (PT) domain; sequence TSLVHQITAE…RLLMDRFFSP (320 aa). Residues 1321–1457 are N-terminal hotdog fold; it reads HQITAETVEA…ATVRFEDPVA (137 aa). Positions 1321-1631 constitute a PKS/mFAS DH domain; the sequence is HQITAETVEA…FRRVPRLLMD (311 aa). Histidine 1353 (proton acceptor; for dehydratase activity) is an active-site residue. A C-terminal hotdog fold region spans residues 1485–1631; that stretch reads ASRLSKPLAY…FRRVPRLLMD (147 aa). Aspartate 1542 acts as the Proton donor; for dehydratase activity in catalysis. Residues 1688 to 1720 form a disordered region; that stretch reads TPESTPPLAPSSESSTPKESPIATPPESERADP. The segment covering 1697 to 1708 has biased composition (low complexity); the sequence is PSSESSTPKESP. In terms of domain architecture, Carrier spans 1719-1796; the sequence is DPMDNMVSQC…EMTAWIEEYC (78 aa). Serine 1756 carries the O-(pantetheine 4'-phosphoryl)serine modification.

Pantetheine 4'-phosphate is required as a cofactor.

The protein operates within secondary metabolite biosynthesis. In terms of biological role, non-reducing polyketide synthase; part of the gene cluster that mediates the biosynthesis of neosartoricin B, a prenylated anthracenone that probably exhibits T-cell antiproliferative activity, suggestive of a physiological role as an immunosuppressive agent. The non-reducing polyketide synthase nscA probably synthesizes and cyclizes the decaketide backbone. The hydrolase nscB then mediates the product release through hydrolysis followed by spontaneous decarboxylation. The prenyltransferase nscD catalyzes the addition of the dimethylallyl group to the aromatic C5. The FAD-dependent monooxygenase nscC is then responsible for the stereospecific hydroxylation at C2. Neosartoricin B can be converted into two additional compounds neosartoricins C and D. Neosartoricin C is a spirocyclic compound that is cyclized through the attack of C3 hydroxyl on C14, followed by dehydration. On the other hand, neosartoricin D is a further cyclized compound in which attack of C2 on C14 in neosartoricin C results in the formation of the acetal-containing dioxabicyclo-octanone ring. Both of these compounds are novel and possibly represent related metabolites of the gene cluster. The sequence is that of Non-reducing polyketide synthase nscA from Arthroderma otae (strain ATCC MYA-4605 / CBS 113480) (Microsporum canis).